The primary structure comprises 591 residues: MNQGKIITVSGPLVVASGMQEANIQDICRVGHLGLVGEIIEMRRDQASIQVYEETSGIGPGEPVVTTGCPLSVELGPGLISEMFDGIQRPLDRFQKATDSDFLIRGVAIPSLDRKAKWAFIPKLSVGQEVVAGDILGTVQETAVIEHRIMVPYKVSGTLVAIHAGDFTVTDTVYEIKQEDGSIYQGSLMQTWPVRQSRPVAQKLIPVEPLVTGQRVIDTFFPVTKGGAAAVPGPFGAGKTVVQHQIAKFANVDIVIYVGCGERGNEMTDVLNEFPELIDPNTGQSIMERTVLIANTSNMPVAAREASIYTGITIAEYFRDMGYSVAIMADSTSRWAEALREMSGRLQEMPGDEGYPAYLGSRIAEYYERAGRVRTLGSQEREGTITAIGAVSPPGGDISEPVTQNTLRIIKVFWGLDAPLAQRRHFPAINWLTSYSLYQDDVGSYIDRKQESNWSNKVTRAMAILQREASLEEIVRLVGLDSLSEQDRLTMAVARQIREDYLQQNAFDSVDTFTSFPKQEAMLTNILTFNEEASKALSLGAYFNEIMEGTAQVRDRIARSKFIPEENLEQIKGLTQKVTKEIHHVLAKGGI.

233-240 (GPFGAGKT) contributes to the ATP binding site.

This sequence belongs to the ATPase alpha/beta chains family.

It carries out the reaction ATP + H2O + 4 H(+)(in) = ADP + phosphate + 5 H(+)(out). Its function is as follows. Produces ATP from ADP in the presence of a proton gradient across the membrane. The V-type alpha chain is a catalytic subunit. The polypeptide is V-type ATP synthase alpha chain (Streptococcus pyogenes serotype M3 (strain ATCC BAA-595 / MGAS315)).